Here is a 116-residue protein sequence, read N- to C-terminus: MTSSNFPKAERLLRRPEFLQFNEGASKLHTQHFLVLLKLKEGTGTRVGFTVSKKVGNAVVRNSIKRRLREFYRQNKSLFILADINIVAKKGADVLDFQQISTELAAAFGRLRKKYA.

The protein belongs to the RnpA family. As to quaternary structure, consists of a catalytic RNA component (M1 or rnpB) and a protein subunit.

It carries out the reaction Endonucleolytic cleavage of RNA, removing 5'-extranucleotides from tRNA precursor.. Functionally, RNaseP catalyzes the removal of the 5'-leader sequence from pre-tRNA to produce the mature 5'-terminus. It can also cleave other RNA substrates such as 4.5S RNA. The protein component plays an auxiliary but essential role in vivo by binding to the 5'-leader sequence and broadening the substrate specificity of the ribozyme. The protein is Ribonuclease P protein component of Geobacter sp. (strain M21).